The sequence spans 353 residues: Photosystem II D2 protein (353 aa).

Thr2 bears the N-acetylthreonine mark. Phosphothreonine is present on Thr2. The helical transmembrane segment at 41 to 61 (CAYFAVGGWFTGTTFVTSWYT) threads the bilayer. His118 contacts chlorophyll a. The helical transmembrane segment at 125–141 (GFMLRQFELARSVQLRP) threads the bilayer. Gln130 and Asn143 together coordinate pheophytin a. Residues 153 to 166 (VFVSVFLIYPLGQS) form a helical membrane-spanning segment. His198 contributes to the chlorophyll a binding site. The chain crosses the membrane as a helical span at residues 208–228 (AALLCAIHGATVENTLFEDGD). The a plastoquinone site is built by His215 and Phe262. His215 serves as a coordination point for Fe cation. Residue His269 coordinates Fe cation. Residues 279–295 (GLWMSALGVVGLALNLR) traverse the membrane as a helical segment.

The protein belongs to the reaction center PufL/M/PsbA/D family. In terms of assembly, PSII is composed of 1 copy each of membrane proteins PsbA, PsbB, PsbC, PsbD, PsbE, PsbF, PsbH, PsbI, PsbJ, PsbK, PsbL, PsbM, PsbT, PsbX, PsbY, PsbZ, Psb30/Ycf12, at least 3 peripheral proteins of the oxygen-evolving complex and a large number of cofactors. It forms dimeric complexes. The D1/D2 heterodimer binds P680, chlorophylls that are the primary electron donor of PSII, and subsequent electron acceptors. It shares a non-heme iron and each subunit binds pheophytin, quinone, additional chlorophylls, carotenoids and lipids. There is also a Cl(-1) ion associated with D1 and D2, which is required for oxygen evolution. The PSII complex binds additional chlorophylls, carotenoids and specific lipids. serves as cofactor.

The protein resides in the plastid. Its subcellular location is the chloroplast thylakoid membrane. It carries out the reaction 2 a plastoquinone + 4 hnu + 2 H2O = 2 a plastoquinol + O2. Photosystem II (PSII) is a light-driven water:plastoquinone oxidoreductase that uses light energy to abstract electrons from H(2)O, generating O(2) and a proton gradient subsequently used for ATP formation. It consists of a core antenna complex that captures photons, and an electron transfer chain that converts photonic excitation into a charge separation. The D1/D2 (PsbA/PsbD) reaction center heterodimer binds P680, the primary electron donor of PSII as well as several subsequent electron acceptors. D2 is needed for assembly of a stable PSII complex. The chain is Photosystem II D2 protein from Cucumis sativus (Cucumber).